The chain runs to 213 residues: High frequency lysogenization protein HflD (213 aa).

The stretch at 79 to 126 (QGLNAELTRYTLSLMVLERKLSSAKGALDTLGNRINGLQRQLEHFDLQ) forms a coiled coil.

Belongs to the HflD family. Interacts with CII protein from phage lambda.

It is found in the cytoplasm. Its subcellular location is the cell inner membrane. Negative regulator of phage lambda lysogenization. Contributes to the degradation of the phage regulatory protein CII. Acts probably by holding CII on the membrane surface, away from the target promoters, but close to the FtsH protease. This chain is High frequency lysogenization protein HflD, found in Escherichia coli O127:H6 (strain E2348/69 / EPEC).